A 542-amino-acid polypeptide reads, in one-letter code: 4-coumarate--CoA ligase-like 5 (542 aa).

ATP-binding residues include Ser204, Ser205, Gly206, Thr207, Thr208, and Lys212. Phe262 lines the (E)-4-coumaroyl-AMP pocket. Residue Arg282 coordinates CoA. The segment at 284–353 is SBD1; that stretch reads DFIAALRAIE…SVFPNVELVQ (70 aa). (E)-4-coumaroyl-AMP contacts are provided by Gly331, Gln353, Gly354, and Thr358. Residues Gln353, Gly354, Thr358, Asp418, and Arg433 each contribute to the ATP site. Positions 354 to 397 are SBD2; the sequence is GYGLTESSGAVAATVGPEESKAYGSVGKLGSHLQAKIVDPSTGY. Positions 435 and 439 each coordinate (E)-4-coumaroyl-AMP. Residues Lys441 and Gly442 each contribute to the CoA site. ATP is bound at residue Lys524.

Belongs to the ATP-dependent AMP-binding enzyme family. Mg(2+) serves as cofactor.

The enzyme catalyses (E)-4-coumarate + ATP + CoA = (E)-4-coumaroyl-CoA + AMP + diphosphate. It catalyses the reaction (E)-4-coumarate + ATP + H(+) = (E)-4-coumaroyl-AMP + diphosphate. The catalysed reaction is (E)-4-coumaroyl-AMP + CoA = (E)-4-coumaroyl-CoA + AMP + H(+). Its function is as follows. Carboxylate--CoA ligase that may use 4-coumarate as substrate. Follows a two-step reaction mechanism, wherein the carboxylate substrate first undergoes adenylation by ATP, followed by a thioesterification in the presence of CoA to yield the final CoA thioester. In Oryza sativa subsp. japonica (Rice), this protein is 4-coumarate--CoA ligase-like 5 (4CLL5).